The primary structure comprises 293 residues: MPAGLITALPNQLRAITMQLRLDTNGELSETSQQTVGVPFVENARMTCRKVDVHYGEKCAIKNISIDVGRNEVLAMIGPSGCGKSTFLRCLNRMNDSLASCRVSGDITLDGVNIYAPTVDVVPLRAQVGMVFQKPNPFPKSIFDNVSYGPRIHGLATGKADLSEIVESSLIKAGLWDEVKDRLHESGTSLSGGQQQRLCIARAIAVSPEVILMDEPCSALDPIATAKVEELIAELSTQYSIVIVTHAMQQASRVSQRTAYFHMGSLVEVGATEKIFTNPGHQLTEDYITGRFG.

Residues 46–288 (MTCRKVDVHY…PGHQLTEDYI (243 aa)) enclose the ABC transporter domain. 78–85 (GPSGCGKS) lines the ATP pocket.

Belongs to the ABC transporter superfamily. Phosphate importer (TC 3.A.1.7) family. The complex is composed of two ATP-binding proteins (PstB), two transmembrane proteins (PstC and PstA) and a solute-binding protein (PstS).

It localises to the cell inner membrane. The catalysed reaction is phosphate(out) + ATP + H2O = ADP + 2 phosphate(in) + H(+). Part of the ABC transporter complex PstSACB involved in phosphate import. Responsible for energy coupling to the transport system. In Desulfotalea psychrophila (strain LSv54 / DSM 12343), this protein is Phosphate import ATP-binding protein PstB.